The primary structure comprises 198 residues: ATP-dependent Clp protease proteolytic subunit (198 aa).

S98 functions as the Nucleophile in the catalytic mechanism. Residue H123 is part of the active site.

The protein belongs to the peptidase S14 family. Fourteen ClpP subunits assemble into 2 heptameric rings which stack back to back to give a disk-like structure with a central cavity, resembling the structure of eukaryotic proteasomes.

Its subcellular location is the cytoplasm. The enzyme catalyses Hydrolysis of proteins to small peptides in the presence of ATP and magnesium. alpha-casein is the usual test substrate. In the absence of ATP, only oligopeptides shorter than five residues are hydrolyzed (such as succinyl-Leu-Tyr-|-NHMec, and Leu-Tyr-Leu-|-Tyr-Trp, in which cleavage of the -Tyr-|-Leu- and -Tyr-|-Trp bonds also occurs).. Its function is as follows. Cleaves peptides in various proteins in a process that requires ATP hydrolysis. Has a chymotrypsin-like activity. Plays a major role in the degradation of misfolded proteins. The chain is ATP-dependent Clp protease proteolytic subunit from Ehrlichia ruminantium (strain Gardel).